Reading from the N-terminus, the 235-residue chain is Probable 2-phosphosulfolactate phosphatase (235 aa).

The protein belongs to the ComB family. Requires Mg(2+) as cofactor.

The enzyme catalyses (2R)-O-phospho-3-sulfolactate + H2O = (2R)-3-sulfolactate + phosphate. This is Probable 2-phosphosulfolactate phosphatase from Clostridium novyi (strain NT).